A 131-amino-acid chain; its full sequence is Tegument protein ORF52 (131 aa).

A disordered region spans residues 103-131 (SDGGTAKPPPGANNRRRRGASTTRAGVDD). Positions 122-131 (ASTTRAGVDD) are enriched in low complexity. A Phosphoserine; by host modification is found at S123.

Belongs to the herpesviridae BLRF2 family. In terms of assembly, homooligomer; homooligomerizes and binds double-stranded DNA (dsDNA) cooperatively. Interacts with host CGAS. Interacts with PQBP1.

It localises to the host cytoplasm. Its subcellular location is the virion tegument. Its function is as follows. Plays a role in the inhibition of host innate immune system by targeting the CGAS enzymatic activity which is the principal cytosolic DNA sensor that detects invading viral DNA. Acts by inhibiting CGAS-DNA phase separation: directly binds double-stranded DNA (dsDNA) in a length dependent but sequence independent manner and is able to form DNA-induced phase separation in infected cells. DNA phase separation of ORF52 mediates disruption of liquid-like droplets in which CGAS is activated, thereby preventing CGAS activity. Targets also the HDP-RNP complex composed of DNA-PK subunits and paraspeckle proteins. This complex is a key nuclear regulator of DNA-mediated activation of innate immune response through the cGAS-STING pathway. This is Tegument protein ORF52 from Homo sapiens (Human).